A 155-amino-acid chain; its full sequence is Small ribosomal subunit protein uS7cz/uS7cy (155 aa).

This sequence belongs to the universal ribosomal protein uS7 family. Part of the 30S ribosomal subunit.

It localises to the plastid. It is found in the chloroplast. Its function is as follows. One of the primary rRNA binding proteins, it binds directly to 16S rRNA where it nucleates assembly of the head domain of the 30S subunit. The sequence is that of Small ribosomal subunit protein uS7cz/uS7cy (rps7-A) from Ipomoea purpurea (Common morning glory).